Here is a 392-residue protein sequence, read N- to C-terminus: MKEIHKQPPTIAIVAGEVSGDILGAGLIRSLKVQYPHARFIGIAGPRMLAEGAETLVDMEELSVMGLAEVVKHLPRLLKIRRQLIHTMLQEKPDIFIGIDAPDFNIDVELKLKENGIKTIHYVSPSVWAWRQNRIHKIAKATHLVLAFLPFEKAFYDRFEVPCRFIGHTMADAIALKPNRQEACEYLNLDASQRYVAILVGSRGSEVTFLAEPFLQAAKLLKQQYPDIQFLVPLINAKRREQFEQIKAQVAPELELILLDGKARQAMIAAEATLLASGTAALEAMLCKSPMVVGYRMKATTYFLAKRLVKTEYVSLPNLLANEMLVPELIQEQCTAENLAEKLALYLSQEESALQQRHTLIQRFTDLHKLIQCDADKQAAQAVIALLEQEDK.

This sequence belongs to the LpxB family.

The catalysed reaction is a lipid X + a UDP-2-N,3-O-bis[(3R)-3-hydroxyacyl]-alpha-D-glucosamine = a lipid A disaccharide + UDP + H(+). It functions in the pathway bacterial outer membrane biogenesis; LPS lipid A biosynthesis. Functionally, condensation of UDP-2,3-diacylglucosamine and 2,3-diacylglucosamine-1-phosphate to form lipid A disaccharide, a precursor of lipid A, a phosphorylated glycolipid that anchors the lipopolysaccharide to the outer membrane of the cell. This Pasteurella multocida (strain Pm70) protein is Lipid-A-disaccharide synthase (lpxB).